The primary structure comprises 362 residues: Protein RecA (362 aa).

Position 65 to 72 (65 to 72) interacts with ATP; the sequence is GPESSGKT. A disordered region spans residues 323-362; the sequence is RVANGMEPLNEKSTKETADDKASGKTGENKQETIEEASKE. A compositionally biased stretch (basic and acidic residues) spans 331–362; it reads LNEKSTKETADDKASGKTGENKQETIEEASKE.

This sequence belongs to the RecA family.

It is found in the cytoplasm. Can catalyze the hydrolysis of ATP in the presence of single-stranded DNA, the ATP-dependent uptake of single-stranded DNA by duplex DNA, and the ATP-dependent hybridization of homologous single-stranded DNAs. It interacts with LexA causing its activation and leading to its autocatalytic cleavage. In Limosilactobacillus reuteri (strain DSM 20016) (Lactobacillus reuteri), this protein is Protein RecA.